Here is a 557-residue protein sequence, read N- to C-terminus: Hydroxylamine reductase (557 aa).

The [4Fe-4S] cluster site is built by C3, C6, C19, and C26. Residues H253, E277, C321, C408, C436, C461, E495, and K497 each coordinate hybrid [4Fe-2O-2S] cluster. C408 carries the post-translational modification Cysteine persulfide.

This sequence belongs to the HCP family. The cofactor is [4Fe-4S] cluster. Hybrid [4Fe-2O-2S] cluster serves as cofactor.

It localises to the cytoplasm. It catalyses the reaction A + NH4(+) + H2O = hydroxylamine + AH2 + H(+). In terms of biological role, catalyzes the reduction of hydroxylamine to form NH(3) and H(2)O. The polypeptide is Hydroxylamine reductase (Acidiphilium cryptum (strain JF-5)).